The primary structure comprises 1318 residues: MSAEQRKKKKTTTTTQGRGAEVAMADEDGGRLRAAAETTGGPGSPDPADGPPPTPNPDRRPAARPGFGWHGGPEENEDEADDAAADADADEAAPASGEAVDEPAADGVVSPRQLALLASMVDEAVRTIPSPPPERDGAQEEAARSPSPPRTPSMRADYGEENDDDDDDDDDDDRDAGRWVRGPETTSAVRGAYPDPMASLSPRPPAPRRHHHHHHHRRRRAPRRRSAASDSSKSGSSSSASSASSSASSSSSASASSSDDDDDDDAARAPASAADHAAGGTLGADDEEAGVPARAPGAAPRPSPPRAEPAPARTPAATAGRLERRRARAAVAGRDATGRFTAGRPRRVELDADAASGAFYARYRDGYVSGEPWPGAGPPPPGRVLYGGLGDSRPGLWGAPEAEEARARFEASGAPAPVWAPELGDAAQQYALITRLLYTPDAEAMGWLQNPRVAPGDVALDQACFRISGAARNSSSFISGSVARAVPHLGYAMAAGRFGWGLAHVAAAVAMSRRYDRAQKGFLLTSLRRAYAPLLARENAALTGARTPDDGGDANRHDGDDARGKPAAAAAPLPSAAASPADERAVPAGYGAAGVLAALGRLSAAPASAPAGADDDDDDDGAGGGGGGRRAEAGRVAVECLAACRGILEALAEGFDGDLAAVPGLAGARPAAPPRPGPAGAAAPPHADAPRLRAWLRELRFVRDALVLMRLRGDLRVAGGSEAAVAAVRAVSLVAGALGPALPRSPRLLSSAAAAAADLLFQNQSLRPLLADTVAAADSLAAPASAPREARKRKSPAPARAPPGGAPRPPKKSRADAPRPAAAPPAGAAPPAPPTPPPRPPRPAALTRRPAEGPDPQGGWRRQPPGPSHTPAPSAAALEAYCAPRAVAELTDHPLFPAPWRPALMFDPRALASLAARCAAPPPGGAPAAFGPLRASGPLRRAAAWMRQVPDPEDVRVVILYSPLPGEDLAAGRAGGGPPPEWSAERGGLSCLLAALGNRLCGPATAAWAGNWTGAPDVSALGAQGVLLLSTRDLAFAGAVEFLGLLAGACDRRLIVVNAVRAADWPADGPVVSRQHAYLACEVLPAVQCAVRWPAARDLRRTVLASGRVFGPGVFARVEAAHARLYPDAPPLRLCRGANVRYRVRTRFGPDTLVPMSPREYRRAVLPALDGRAAASGAGDAMAPGAPDFCEDEAHSHRACARWGLGAPLRPVYVALGRDAVRGGPAELRGPRREFCARALLEPDGDAPPLVLRDDADAGPPPQIRWASAAGRAGTVLAAAGGGVEVVGTAAGLATPPRREPVDMDAELEDDDDGLFGE.

Over residues 1-11 (MSAEQRKKKKT) the composition is skewed to basic residues. 6 disordered regions span residues 1–108 (MSAE…ADGV), 123–324 (EAVR…RLER), 542–580 (LTGARTPDDGGDANRHDGDDARGKPAAAAAPLPSAAASP), 606–630 (PASAPAGADDDDDDDGAGGGGGGRR), 780–873 (LAAP…TPAP), and 1291–1318 (AGLATPPRREPVDMDAELEDDDDGLFGE). Over residues 44–56 (SPDPADGPPPTPN) the composition is skewed to pro residues. A compositionally biased stretch (acidic residues) spans 74–91 (EENEDEADDAAADADADE). The span at 133 to 143 (PERDGAQEEAA) shows a compositional bias: basic and acidic residues. Residues 159-174 (GEENDDDDDDDDDDDR) are compositionally biased toward acidic residues. Over residues 206–226 (APRRHHHHHHHRRRRAPRRRS) the composition is skewed to basic residues. Composition is skewed to low complexity over residues 228–257 (ASDSSKSGSSSSASSASSSASSSSSASASS) and 268–278 (RAPASAADHAA). Residues 299 to 308 (APRPSPPRAE) show a composition bias toward pro residues. Over residues 309 to 320 (PAPARTPAATAG) the composition is skewed to low complexity. The DNA-binding element occupies 319 to 547 (AGRLERRRAR…ENAALTGART (229 aa)). Residues 547-564 (TPDDGGDANRHDGDDARG) show a composition bias toward basic and acidic residues. The span at 566 to 580 (PAAAAAPLPSAAASP) shows a compositional bias: low complexity. Composition is skewed to pro residues over residues 799–808 (ARAPPGGAPR) and 821–843 (AAAPPAGAAPPAPPTPPPRPPRP). Residues 844–863 (AALTRRPAEGPDPQGGWRRQ) show a composition bias toward low complexity. Residues 1303-1318 (DMDAELEDDDDGLFGE) are compositionally biased toward acidic residues.

Belongs to the herpesviridae ICP4 family. As to quaternary structure, homodimer. Interacts with transcriptional regulator ICP27; this interaction is required for proper incorporation of ICP4 into virions. Interacts with host TBP; theis interaction helps the stabilization of the pre-initiation complex on specific promoters. Interacts with host GTF2B. Post-translationally, ADP-ribosylated. In terms of processing, the long stretch of Ser is a major site of phosphorylation. Only the phosphorylated forms are capable of interacting with beta or gamma genes.

The protein resides in the host nucleus. Its subcellular location is the host cytoplasm. The protein localises to the virion tegument. Plays an essential role in the regulation of viral gene expression by both activating and repressing host RNA polymerase II-mediated transcription. Binds with high affinity to the sequence 5'-ATCGTC-3'. Activates transcription by recruiting a form of the host TFIID to promoters and stabilizing the pre-initiation complex formation. Negatively regulates its own transcription. This immediate early (IE) protein is absolutely necessary for the transition from IE transcription to later viral gene transcription. In addition, binds to the host promoters of CXCR3 ligands including CXCL9, CXCL10, and CXCL11 and interacts with TBP to activate their transcription. In turn, mediates CD4+ T-cell migration. The polypeptide is Major viral transcription factor ICP4 homolog (ICP4) (Human herpesvirus 2 (strain HG52) (HHV-2)).